The sequence spans 350 residues: Biotin synthase (350 aa).

One can recognise a Radical SAM core domain in the interval Arg38–Ser262. [4Fe-4S] cluster contacts are provided by Cys53, Cys57, and Cys60. 4 residues coordinate [2Fe-2S] cluster: Cys97, Cys128, Cys188, and Arg260.

The protein belongs to the radical SAM superfamily. Biotin synthase family. In terms of assembly, homodimer. It depends on [4Fe-4S] cluster as a cofactor. The cofactor is [2Fe-2S] cluster.

It carries out the reaction (4R,5S)-dethiobiotin + (sulfur carrier)-SH + 2 reduced [2Fe-2S]-[ferredoxin] + 2 S-adenosyl-L-methionine = (sulfur carrier)-H + biotin + 2 5'-deoxyadenosine + 2 L-methionine + 2 oxidized [2Fe-2S]-[ferredoxin]. Its pathway is cofactor biosynthesis; biotin biosynthesis; biotin from 7,8-diaminononanoate: step 2/2. Catalyzes the conversion of dethiobiotin (DTB) to biotin by the insertion of a sulfur atom into dethiobiotin via a radical-based mechanism. This Yersinia enterocolitica serotype O:8 / biotype 1B (strain NCTC 13174 / 8081) protein is Biotin synthase.